The sequence spans 178 residues: Napin-B (178 aa).

A signal peptide spans Met1–Ala21. 2 consecutive propeptides follow at residues Ser22–Pro38 and Pro75–Gly94.

Belongs to the 2S seed storage albumins family. In terms of assembly, the mature protein consists of a small and a large chain linked by disulfide bonds. As to expression, cotyledons and the axis.

The small, basic, water-soluble napins are one of the two major kinds of storage proteins synthesized in the seed during its maturation. This is Napin-B (NAPB) from Brassica napus (Rape).